The primary structure comprises 339 residues: Ketol-acid reductoisomerase (NADP(+)) (339 aa).

Positions 1-182 constitute a KARI N-terminal Rossmann domain; sequence MRVYYDCDVN…GGGRSGIMKT (182 aa). Residues 24 to 27, S51, T53, and 83 to 86 contribute to the NADP(+) site; these read YGAQ and DELQ. The active site involves H108. An NADP(+)-binding site is contributed by G134. Residues 183–328 enclose the KARI C-terminal knotted domain; sequence TFREECETDL…DKIRSMMALT (146 aa). Mg(2+) contacts are provided by D191, E195, E227, and E231. S252 is a substrate binding site.

It belongs to the ketol-acid reductoisomerase family. Requires Mg(2+) as cofactor.

It carries out the reaction (2R)-2,3-dihydroxy-3-methylbutanoate + NADP(+) = (2S)-2-acetolactate + NADPH + H(+). It catalyses the reaction (2R,3R)-2,3-dihydroxy-3-methylpentanoate + NADP(+) = (S)-2-ethyl-2-hydroxy-3-oxobutanoate + NADPH + H(+). Its pathway is amino-acid biosynthesis; L-isoleucine biosynthesis; L-isoleucine from 2-oxobutanoate: step 2/4. It participates in amino-acid biosynthesis; L-valine biosynthesis; L-valine from pyruvate: step 2/4. In terms of biological role, involved in the biosynthesis of branched-chain amino acids (BCAA). Catalyzes an alkyl-migration followed by a ketol-acid reduction of (S)-2-acetolactate (S2AL) to yield (R)-2,3-dihydroxy-isovalerate. In the isomerase reaction, S2AL is rearranged via a Mg-dependent methyl migration to produce 3-hydroxy-3-methyl-2-ketobutyrate (HMKB). In the reductase reaction, this 2-ketoacid undergoes a metal-dependent reduction by NADPH to yield (R)-2,3-dihydroxy-isovalerate. In Bartonella bacilliformis (strain ATCC 35685 / KC583 / Herrer 020/F12,63), this protein is Ketol-acid reductoisomerase (NADP(+)).